Reading from the N-terminus, the 268-residue chain is Phosphatidylglycerol--prolipoprotein diacylglyceryl transferase (268 aa).

7 helical membrane passes run 23-43, 62-82, 97-117, 132-152, 179-199, 206-226, and 241-261; these read IGLRWYGLMYLLGFVFARWLA, LLFNGFMGVFIGGRVGDVFFY, VWEGGMSFHGGLIGVIVAMIW, FVAPLIPFGLGLGRIGNFINL, SQLYEAFLEGLVLFAILNIFI, ASVAGLFLIGYGVFRFIVEYV, and GQALCLPMIIGGAFIMAWAYS. Arg145 contributes to the a 1,2-diacyl-sn-glycero-3-phospho-(1'-sn-glycerol) binding site.

The protein belongs to the Lgt family.

The protein resides in the cell inner membrane. The enzyme catalyses L-cysteinyl-[prolipoprotein] + a 1,2-diacyl-sn-glycero-3-phospho-(1'-sn-glycerol) = an S-1,2-diacyl-sn-glyceryl-L-cysteinyl-[prolipoprotein] + sn-glycerol 1-phosphate + H(+). It functions in the pathway protein modification; lipoprotein biosynthesis (diacylglyceryl transfer). Catalyzes the transfer of the diacylglyceryl group from phosphatidylglycerol to the sulfhydryl group of the N-terminal cysteine of a prolipoprotein, the first step in the formation of mature lipoproteins. The sequence is that of Phosphatidylglycerol--prolipoprotein diacylglyceryl transferase from Haemophilus influenzae (strain 86-028NP).